Reading from the N-terminus, the 151-residue chain is Aspartate carbamoyltransferase regulatory chain (151 aa).

Cysteine 107, cysteine 112, cysteine 135, and cysteine 138 together coordinate Zn(2+).

This sequence belongs to the PyrI family. As to quaternary structure, contains catalytic and regulatory chains. It depends on Zn(2+) as a cofactor.

Functionally, involved in allosteric regulation of aspartate carbamoyltransferase. This is Aspartate carbamoyltransferase regulatory chain from Psychromonas ingrahamii (strain DSM 17664 / CCUG 51855 / 37).